Reading from the N-terminus, the 534-residue chain is CTP synthase (534 aa).

Residues 1–267 form an amidoligase domain region; that stretch reads MTKYIFVTGG…DQIVCDHLKL (267 aa). S13 lines the CTP pocket. S13 provides a ligand contact to UTP. 14 to 19 is an ATP binding site; it reads SIGKGI. Y54 lines the L-glutamine pocket. An ATP-binding site is contributed by D71. Mg(2+)-binding residues include D71 and E141. Residues 148-150, 188-193, and K224 each bind CTP; these read DIE and KTKPTQ. UTP is bound by residues 188–193 and K224; that span reads KTKPTQ. In terms of domain architecture, Glutamine amidotransferase type-1 spans 292-534; it reads KIALVGKYVE…FVTAAVENMK (243 aa). Residue G354 coordinates L-glutamine. C381 acts as the Nucleophile; for glutamine hydrolysis in catalysis. L-glutamine-binding positions include 382–385, E405, and R463; that span reads LGMQ. Residues H508 and E510 contribute to the active site.

The protein belongs to the CTP synthase family. In terms of assembly, homotetramer.

The enzyme catalyses UTP + L-glutamine + ATP + H2O = CTP + L-glutamate + ADP + phosphate + 2 H(+). It carries out the reaction L-glutamine + H2O = L-glutamate + NH4(+). The catalysed reaction is UTP + NH4(+) + ATP = CTP + ADP + phosphate + 2 H(+). Its pathway is pyrimidine metabolism; CTP biosynthesis via de novo pathway; CTP from UDP: step 2/2. With respect to regulation, allosterically activated by GTP, when glutamine is the substrate; GTP has no effect on the reaction when ammonia is the substrate. The allosteric effector GTP functions by stabilizing the protein conformation that binds the tetrahedral intermediate(s) formed during glutamine hydrolysis. Inhibited by the product CTP, via allosteric rather than competitive inhibition. Catalyzes the ATP-dependent amination of UTP to CTP with either L-glutamine or ammonia as the source of nitrogen. Regulates intracellular CTP levels through interactions with the four ribonucleotide triphosphates. The polypeptide is CTP synthase (Streptococcus agalactiae serotype Ia (strain ATCC 27591 / A909 / CDC SS700)).